Reading from the N-terminus, the 1075-residue chain is Putative type I restriction enzyme MjaVIIP endonuclease subunit (1075 aa).

It belongs to the HsdR family. The type I restriction/modification system is composed of three polypeptides R, M and S.

The enzyme catalyses Endonucleolytic cleavage of DNA to give random double-stranded fragments with terminal 5'-phosphates, ATP is simultaneously hydrolyzed.. The restriction (R) subunit of a type I restriction enzyme that recognizes 5'-CAAN(7)TGG-3' and cleaves a random distance away. The R subunit is required for both endonuclease and ATPase activities but not for modification. After locating a non-methylated recognition site, the enzyme complex serves as a molecular motor that translocates DNA in an ATP-dependent manner until a collision occurs that triggers cleavage. The chain is Putative type I restriction enzyme MjaVIIP endonuclease subunit from Methanocaldococcus jannaschii (strain ATCC 43067 / DSM 2661 / JAL-1 / JCM 10045 / NBRC 100440) (Methanococcus jannaschii).